A 115-amino-acid polypeptide reads, in one-letter code: Transcription initiation factor IIA subunit 2 (115 aa).

It belongs to the TFIIA subunit 2 family. In terms of assembly, TFIIA is a heterodimer of the large unprocessed subunit 1 and a small subunit gamma.

It is found in the nucleus. TFIIA is a component of the transcription machinery of RNA polymerase II and plays an important role in transcriptional activation. TFIIA in a complex with tbp mediates transcriptional activity. The sequence is that of Transcription initiation factor IIA subunit 2 (gtf2a2) from Dictyostelium discoideum (Social amoeba).